A 348-amino-acid polypeptide reads, in one-letter code: NADH-quinone oxidoreductase subunit H (348 aa).

Helical transmembrane passes span 25–45, 95–115, 128–148, 168–188, 204–224, 254–274, 287–307, and 327–347; these read ILFL…VAAL, FMFI…FAII, IGIL…MFGG, ISYE…TGSF, WNIF…VAVT, FFIG…CLFF, ILPP…MFVL, and VCLP…LISA.

This sequence belongs to the complex I subunit 1 family. In terms of assembly, NDH-1 is composed of 14 different subunits. Subunits NuoA, H, J, K, L, M, N constitute the membrane sector of the complex.

The protein resides in the cell inner membrane. The catalysed reaction is a quinone + NADH + 5 H(+)(in) = a quinol + NAD(+) + 4 H(+)(out). Its function is as follows. NDH-1 shuttles electrons from NADH, via FMN and iron-sulfur (Fe-S) centers, to quinones in the respiratory chain. The immediate electron acceptor for the enzyme in this species is believed to be ubiquinone. Couples the redox reaction to proton translocation (for every two electrons transferred, four hydrogen ions are translocated across the cytoplasmic membrane), and thus conserves the redox energy in a proton gradient. This subunit may bind ubiquinone. The sequence is that of NADH-quinone oxidoreductase subunit H from Psychrobacter sp. (strain PRwf-1).